A 303-amino-acid chain; its full sequence is Pseudouridine-5'-phosphate glycosidase (303 aa).

The active-site Proton donor is the Glu-26. 2 residues coordinate substrate: Lys-87 and Val-107. A Mn(2+)-binding site is contributed by Asp-139. Substrate is bound at residue 141-143 (SAD). Catalysis depends on Lys-160, which acts as the Nucleophile.

It belongs to the pseudouridine-5'-phosphate glycosidase family. In terms of assembly, homotrimer. The cofactor is Mn(2+).

It carries out the reaction D-ribose 5-phosphate + uracil = psi-UMP + H2O. Its function is as follows. Catalyzes the reversible cleavage of pseudouridine 5'-phosphate (PsiMP) to ribose 5-phosphate and uracil. Functions biologically in the cleavage direction, as part of a pseudouridine degradation pathway. The chain is Pseudouridine-5'-phosphate glycosidase from Saccharopolyspora erythraea (strain ATCC 11635 / DSM 40517 / JCM 4748 / NBRC 13426 / NCIMB 8594 / NRRL 2338).